Consider the following 187-residue polypeptide: ATP synthase subunit delta, chloroplastic (187 aa).

Belongs to the ATPase delta chain family. As to quaternary structure, F-type ATPases have 2 components, F(1) - the catalytic core - and F(0) - the membrane proton channel. F(1) has five subunits: alpha(3), beta(3), gamma(1), delta(1), epsilon(1). CF(0) has four main subunits: a(1), b(1), b'(1) and c(10-14). The alpha and beta chains form an alternating ring which encloses part of the gamma chain. F(1) is attached to F(0) by a central stalk formed by the gamma and epsilon chains, while a peripheral stalk is formed by the delta, b and b' chains.

The protein localises to the plastid. The protein resides in the chloroplast thylakoid membrane. F(1)F(0) ATP synthase produces ATP from ADP in the presence of a proton or sodium gradient. F-type ATPases consist of two structural domains, F(1) containing the extramembraneous catalytic core and F(0) containing the membrane proton channel, linked together by a central stalk and a peripheral stalk. During catalysis, ATP synthesis in the catalytic domain of F(1) is coupled via a rotary mechanism of the central stalk subunits to proton translocation. Functionally, this protein is part of the stalk that links CF(0) to CF(1). It either transmits conformational changes from CF(0) to CF(1) or is implicated in proton conduction. The chain is ATP synthase subunit delta, chloroplastic from Thalassiosira pseudonana (Marine diatom).